Consider the following 292-residue polypeptide: Putative two-component response regulator-like APRR4 (292 aa).

Residues 43–158 (RVLVFDEDPS…DLRIVFKHLV (116 aa)) enclose the Response regulatory domain. A disordered region spans residues 168–215 (VTGEAEKAAGEKSSSVGDSTIRNPNKSKRSSCLEAEVNEEDRHDHNDR). A compositionally biased stretch (polar residues) spans 179 to 191 (KSSSVGDSTIRNP). The segment at residues 225-275 (RVVWDEELHQNFLNAVDFLGLERAVPKKILDVMKVDYISRENVASHLQVTF) is a DNA-binding region (myb-like GARP).

Belongs to the ARR-like family. Binds the target DNA as a monomer.

The protein localises to the nucleus. In terms of biological role, transcriptional activator that binds specifically to the DNA sequence 5'-[AG]GATT-3'. This is Putative two-component response regulator-like APRR4 (APRR4) from Arabidopsis thaliana (Mouse-ear cress).